A 498-amino-acid chain; its full sequence is ATP synthase subunit beta, chloroplastic (498 aa).

172–179 (GGAGVGKT) contacts ATP.

The protein belongs to the ATPase alpha/beta chains family. As to quaternary structure, F-type ATPases have 2 components, CF(1) - the catalytic core - and CF(0) - the membrane proton channel. CF(1) has five subunits: alpha(3), beta(3), gamma(1), delta(1), epsilon(1). CF(0) has four main subunits: a(1), b(1), b'(1) and c(9-12).

The protein localises to the plastid. It localises to the chloroplast thylakoid membrane. It carries out the reaction ATP + H2O + 4 H(+)(in) = ADP + phosphate + 5 H(+)(out). Functionally, produces ATP from ADP in the presence of a proton gradient across the membrane. The catalytic sites are hosted primarily by the beta subunits. In Solanum bulbocastanum (Wild potato), this protein is ATP synthase subunit beta, chloroplastic.